A 543-amino-acid chain; its full sequence is CTP synthase (543 aa).

An amidoligase domain region spans residues 1 to 266; that stretch reads MTKFIFVTGG…DDIICERFGI (266 aa). Ser13 contacts CTP. Ser13 contacts UTP. ATP is bound by residues 14-19 and Asp71; that span reads SLGKGI. Mg(2+) contacts are provided by Asp71 and Glu140. CTP is bound by residues 147–149, 187–192, and Lys223; these read DIE and KTKPTQ. Residues 187-192 and Lys223 contribute to the UTP site; that span reads KTKPTQ. A Glutamine amidotransferase type-1 domain is found at 291–543; sequence TVAIVGKYVE…VKAAIDHQNI (253 aa). Residue Gly354 participates in L-glutamine binding. Cys381 acts as the Nucleophile; for glutamine hydrolysis in catalysis. L-glutamine is bound by residues 382-385, Glu404, and Arg471; that span reads LGMQ. Residues His516 and Glu518 contribute to the active site.

It belongs to the CTP synthase family. Homotetramer.

The enzyme catalyses UTP + L-glutamine + ATP + H2O = CTP + L-glutamate + ADP + phosphate + 2 H(+). The catalysed reaction is L-glutamine + H2O = L-glutamate + NH4(+). It catalyses the reaction UTP + NH4(+) + ATP = CTP + ADP + phosphate + 2 H(+). It functions in the pathway pyrimidine metabolism; CTP biosynthesis via de novo pathway; CTP from UDP: step 2/2. Allosterically activated by GTP, when glutamine is the substrate; GTP has no effect on the reaction when ammonia is the substrate. The allosteric effector GTP functions by stabilizing the protein conformation that binds the tetrahedral intermediate(s) formed during glutamine hydrolysis. Inhibited by the product CTP, via allosteric rather than competitive inhibition. In terms of biological role, catalyzes the ATP-dependent amination of UTP to CTP with either L-glutamine or ammonia as the source of nitrogen. Regulates intracellular CTP levels through interactions with the four ribonucleotide triphosphates. This is CTP synthase from Psychrobacter sp. (strain PRwf-1).